Consider the following 926-residue polypeptide: Lipoxygenase 4, chloroplastic (926 aa).

The transit peptide at 1-58 directs the protein to the chloroplast; it reads MALANEIMGSRLIFERSSSLASPFHSRFSIKKKTQRTQFSINPFDPRPMRAVNSSGVV. Residues 106–228 enclose the PLAT domain; it reads FKETLVKHLD…DHPSKRILFT (123 aa). Residues 231–926 enclose the Lipoxygenase domain; the sequence is PYLPSETPSG…CRGVPNSVSI (696 aa). Fe cation-binding residues include His-585, His-590, His-777, Asn-781, and Ile-926.

It belongs to the lipoxygenase family. Fe cation serves as cofactor. As to expression, expressed in leaves.

The protein resides in the plastid. The protein localises to the chloroplast. It carries out the reaction (9Z,12Z)-octadecadienoate + O2 = (13S)-hydroperoxy-(9Z,11E)-octadecadienoate. The catalysed reaction is (9Z,12Z,15Z)-octadecatrienoate + O2 = (13S)-hydroperoxy-(9Z,11E,15Z)-octadecatrienoate. The protein operates within lipid metabolism; oxylipin biosynthesis. Plant lipoxygenases may be involved in a number of diverse aspects of plant physiology including growth and development, pest resistance, and senescence or responses to wounding. Catalyzes the hydroperoxidation of lipids containing a cis,cis-1,4-pentadiene structure. 13S-lipoxygenase that can use linolenic acid as substrates. In Arabidopsis thaliana (Mouse-ear cress), this protein is Lipoxygenase 4, chloroplastic (LOX4).